A 713-amino-acid polypeptide reads, in one-letter code: Elongation factor G (713 aa).

The 283-residue stretch at 8–290 folds into the tr-type G domain; the sequence is ERYRNFGIMA…GVIQLLPSPV (283 aa). Residues 17 to 24, 88 to 92, and 142 to 145 contribute to the GTP site; these read AHIDAGKT, DTPGH, and NKMD.

This sequence belongs to the TRAFAC class translation factor GTPase superfamily. Classic translation factor GTPase family. EF-G/EF-2 subfamily.

It is found in the cytoplasm. Catalyzes the GTP-dependent ribosomal translocation step during translation elongation. During this step, the ribosome changes from the pre-translocational (PRE) to the post-translocational (POST) state as the newly formed A-site-bound peptidyl-tRNA and P-site-bound deacylated tRNA move to the P and E sites, respectively. Catalyzes the coordinated movement of the two tRNA molecules, the mRNA and conformational changes in the ribosome. The sequence is that of Elongation factor G from Stenotrophomonas maltophilia (strain K279a).